The following is a 1573-amino-acid chain: MRVLACLLAALVGIQAVERLRLADGPHGCAGRLEVWHGGRWGTVCDDGWDLRDAAVACRQLGCGGALAAPGGAFFGEGAGPVWLSELACRGNEGQLGLCHHRGWKAHICSHEEDAGVVCAGQRVANSRDDSTSPLDGAPWPGLLLELSPSTEEPLVTHAPRPAGNPQNASRKKSPRPKQAKSTRAPLLTTGAPRQERLRLVSGPHRCAGRLEVWHGGRWGTVCDDGWDLRDAAVACRELGCGGALAAPGGARFGPGAGPVWMDDVGCGGGEQALRDCPRSPWGRSNCDHSEDAGLVCTGPAPRLRLADGPHGCAGRLEVWHGGRWGSVCDDAWDLRDAAVACRELGCGGALAAPGGAFFGEGSGPIILDDLRCRGNETALRFCPARPWGQHDCHHREDAGAVCDGMPLGYVPPTAPTDSNNSTPREAASRPPSTMTSQAPGTAGVSPPPASPTVLWEPGPEAGSPQLRLVAGPSKCSGRLEVWHDQRWGTVCDDSWDMRDSAVVCRELGCGGPQQPDPAAGRFGWGAGPIWLDDVGCVGTEASLSDCPAAPWGKHNCAHNEDVGVTCTGPPGLDSISDPFSWSWIPGLGRDRDAWLPGELATKPSASVTASVLEKTTTKAPGKMPKSTKKWVTKNAKRPTTQPPVMPTTKHSRAQSPPDLTSQTTAALTTEASRRPTSEFTRRPTTEAPQRWTSHTTATLTPQAPRERTTKTMAMLTTQGPQEMTSESTIKSIPQASLEPSAEIPEGSPESPKDPAPSPSVSTTGESGLFRVRLADGPNRCAGRLEVWHAGRWGTVCDDNWDLRDATVACWELGCGKVRPRVGKTHYGPGTGPIWLDDMGCKGSEASLSDCPSGAWGKHNCDHEEDVGLTCTGYTDYDDYPPWTWDPTSREDLAKGTTTAGVPGHTLPWRTTRRPGSSSPAIRRLPDTGSKDGYKLPWTWDTPSGRGLAEGTPTAGKLGPTLGAGTTRSPGSPPTLRVHGDTGSPRKPWPERRPPRPAATRTAPPTPSPGPSASPGPPGPALTSDSSRELTPHSALTSEATSDAPDTSPPTPDPASRTNPDLILTSPDFALSTPDSSVVPALTPEPSPTPLPTLPKELTSDPSTPSEVTSLSPTSEQVPESDTTPDLDTTPYSSTVSEYSRSPDPSPSPHPTTTPDPTMAPDPITTLNPTVTPHFPTTPHPTTTPHPTTITHSTMIPDPTTTPQPFTTITHSTMIPDPTTTPQPFTTMQPTTTPHSTTPHPTTTPHPTTITHSTMIPDPTTTPQPFTTMQPTTMPHPTTTPHPTTTPHPTTTPHPTTTPHPTMTPDPTTTPYPTTTPDPTTTPHPTTPDPSSTPVITTVSLPTSLGTELSSPTLAPTVKPSLHPQLTFTAPAPHTSTSQIPTLEPSPALESSPSRSSTATSMDPLSTEDFKPPRSQSPNLTPPPTHTPHSASDLTVSPDPLLSPTAHPLDHPPLDPLTLGPTPGQSPGPHGPCVAPTPPVRVMACEPPALVELVAAVRDVGGQLQRLTQVVEQERQERQALLLGLTQLVEAARGLGQLGEAVKRLAEMAWTTSMPAPTTTTPEEEERPLRGDV.

Residues 1-16 (MRVLACLLAALVGIQA) form the signal peptide. Residues 20 to 120 (LRLADGPHGC…HEEDAGVVCA (101 aa)) enclose the SRCR 1 domain. 3 cysteine pairs are disulfide-bonded: C45–C109, C58–C119, and C89–C99. The tract at residues 153 to 192 (EPLVTHAPRPAGNPQNASRKKSPRPKQAKSTRAPLLTTGA) is disordered. N168 carries an N-linked (GlcNAc...) asparagine glycan. Residues 170-181 (SRKKSPRPKQAK) show a composition bias toward basic residues. SRCR domains are found at residues 198-298 (LRLV…LVCT) and 304-404 (LRLA…AVCD). 6 cysteine pairs are disulfide-bonded: C223–C287, C236–C297, C267–C277, C329–C393, C342–C403, and C373–C383. N-linked (GlcNAc...) asparagine glycans are attached at residues N376 and N420. Residues 412 to 465 (PPTAPTDSNNSTPREAASRPPSTMTSQAPGTAGVSPPPASPTVLWEPGPEAGSP) are disordered. Over residues 431–440 (PPSTMTSQAP) the composition is skewed to polar residues. In terms of domain architecture, SRCR 4 spans 467–568 (LRLVAGPSKC…HNEDVGVTCT (102 aa)). 3 disulfides stabilise this stretch: C492/C557, C505/C567, and C537/C547. A disordered region spans residues 614-769 (EKTTTKAPGK…SVSTTGESGL (156 aa)). Positions 626 to 637 (KSTKKWVTKNAK) are enriched in basic residues. A compositionally biased stretch (polar residues) spans 654–671 (AQSPPDLTSQTTAALTTE). A compositionally biased stretch (basic and acidic residues) spans 672 to 685 (ASRRPTSEFTRRPT). Polar residues-rich tracts occupy residues 687 to 702 (EAPQ…TLTP) and 711 to 735 (KTMA…SIPQ). Positions 772 to 872 (VRLADGPNRC…HEEDVGLTCT (101 aa)) constitute an SRCR 5 domain. Intrachain disulfides connect C797–C861, C810–C871, and C841–C851. Disordered regions lie at residues 895 to 1475 (KGTT…PCVA) and 1554 to 1573 (MPAP…RGDV). Positions 924–934 (RLPDTGSKDGY) are enriched in basic and acidic residues. Pro residues-rich tracts occupy residues 1004–1020 (PPTP…PPGP) and 1083–1093 (TPEPSPTPLPT). Positions 1101–1140 (DPSTPSEVTSLSPTSEQVPESDTTPDLDTTPYSSTVSEYS) are enriched in polar residues. The segment covering 1144-1160 (DPSPSPHPTTTPDPTMA) has biased composition (pro residues). Low complexity-rich tracts occupy residues 1161–1175 (PDPI…TPHF) and 1185–1277 (PHPT…MPHP). A compositionally biased stretch (pro residues) spans 1278–1328 (TTTPHPTTTPHPTTTPHPTTTPHPTMTPDPTTTPYPTTTPDPTTTPHPTTP). Composition is skewed to polar residues over residues 1335-1354 (VITT…SPTL) and 1364-1380 (PQLT…TSQI). Low complexity predominate over residues 1381–1401 (PTLEPSPALESSPSRSSTATS). The span at 1464-1475 (GQSPGPHGPCVA) shows a compositional bias: pro residues.

As to quaternary structure, interacts with LGALS1 and laminin. In terms of tissue distribution, highly expressed in monocytes/macrophages and T-lymphocytes. Highly expressed in placenta and spleen, and also detected at lower levels in colon, and more weakly in lung, heart and kidney.

Its subcellular location is the secreted. It localises to the cytoplasm. Functionally, binds to extracellular matrix proteins. Binds to pathogen-associated molecular patterns (PAMPs) present on the cell walls of Gram-positive and Gram-negative bacteria and fungi, behaving as a pattern recognition receptor (PRR). Induces bacterial and fungal aggregation and subsequent inhibition of PAMP-induced cytokine release. Does not possess intrinsic bactericidal activity. May play a role in the innate defense and homeostasis of certain epithelial surfaces. The polypeptide is Soluble scavenger receptor cysteine-rich domain-containing protein SSC5D (SSC5D) (Homo sapiens (Human)).